A 136-amino-acid chain; its full sequence is Histone H3 (136 aa).

Belongs to the histone H3 family. As to quaternary structure, the nucleosome is a histone octamer containing two molecules each of H2A, H2B, H3 and H4 assembled in one H3-H4 heterotetramer and two H2A-H2B heterodimers. The octamer wraps approximately 147 bp of DNA.

Its subcellular location is the nucleomorph. It is found in the chromosome. Core component of nucleosome. Nucleosomes wrap and compact DNA into chromatin, limiting DNA accessibility to the cellular machineries which require DNA as a template. Histones thereby play a central role in transcription regulation, DNA repair, DNA replication and chromosomal stability. DNA accessibility is regulated via a complex set of post-translational modifications of histones, also called histone code, and nucleosome remodeling. The polypeptide is Histone H3 (Guillardia theta (Cryptophyte)).